Here is a 224-residue protein sequence, read N- to C-terminus: UPF0758 protein IL0240 (224 aa).

Positions 102–224 (GFTEPTMVKD…PISFAERGLL (123 aa)) constitute an MPN domain. The Zn(2+) site is built by His-173, His-175, and Asp-186. The short motif at 173-186 (HNHPSGVAEPSQAD) is the JAMM motif element.

The protein belongs to the UPF0758 family.

In Idiomarina loihiensis (strain ATCC BAA-735 / DSM 15497 / L2-TR), this protein is UPF0758 protein IL0240.